The sequence spans 326 residues: Eukaryotic translation initiation factor 3 subunit I (326 aa).

5 WD repeats span residues 8–47 (GHER…RLGT), 50–89 (GHQG…VIAS), 145–184 (MTES…KVVD), 188–227 (DHSA…CLKT), and 285–326 (GHFG…NIFE).

Belongs to the eIF-3 subunit I family. In terms of assembly, component of the eukaryotic translation initiation factor 3 (eIF-3) complex. The eIF-3 complex interacts with pix.

The protein localises to the cytoplasm. In terms of biological role, component of the eukaryotic translation initiation factor 3 (eIF-3) complex, which is involved in protein synthesis of a specialized repertoire of mRNAs and, together with other initiation factors, stimulates binding of mRNA and methionyl-tRNAi to the 40S ribosome. The eIF-3 complex specifically targets and initiates translation of a subset of mRNAs involved in cell proliferation. This Drosophila sechellia (Fruit fly) protein is Eukaryotic translation initiation factor 3 subunit I.